A 945-amino-acid chain; its full sequence is Isoleucine--tRNA ligase (945 aa).

Residues 66–76 (PYANGDIHLGH) carry the 'HIGH' region motif. Residue glutamate 581 coordinates L-isoleucyl-5'-AMP. The 'KMSKS' region signature appears at 622 to 626 (KMSKS). Lysine 625 is a binding site for ATP. Zn(2+) contacts are provided by cysteine 908, cysteine 911, cysteine 928, and cysteine 931.

The protein belongs to the class-I aminoacyl-tRNA synthetase family. IleS type 1 subfamily. Monomer. The cofactor is Zn(2+).

The protein localises to the cytoplasm. It carries out the reaction tRNA(Ile) + L-isoleucine + ATP = L-isoleucyl-tRNA(Ile) + AMP + diphosphate. Functionally, catalyzes the attachment of isoleucine to tRNA(Ile). As IleRS can inadvertently accommodate and process structurally similar amino acids such as valine, to avoid such errors it has two additional distinct tRNA(Ile)-dependent editing activities. One activity is designated as 'pretransfer' editing and involves the hydrolysis of activated Val-AMP. The other activity is designated 'posttransfer' editing and involves deacylation of mischarged Val-tRNA(Ile). In Burkholderia vietnamiensis (strain G4 / LMG 22486) (Burkholderia cepacia (strain R1808)), this protein is Isoleucine--tRNA ligase.